The primary structure comprises 95 residues: Large ribosomal subunit protein bL25 (95 aa).

Belongs to the bacterial ribosomal protein bL25 family. Part of the 50S ribosomal subunit; part of the 5S rRNA/L5/L18/L25 subcomplex. Contacts the 5S rRNA. Binds to the 5S rRNA independently of L5 and L18.

In terms of biological role, this is one of the proteins that binds to the 5S RNA in the ribosome where it forms part of the central protuberance. In Aeromonas salmonicida (strain A449), this protein is Large ribosomal subunit protein bL25.